Consider the following 122-residue polypeptide: UPF0145 protein BceJ2315_57450 (122 aa).

It belongs to the UPF0145 family.

In Burkholderia cenocepacia (strain ATCC BAA-245 / DSM 16553 / LMG 16656 / NCTC 13227 / J2315 / CF5610) (Burkholderia cepacia (strain J2315)), this protein is UPF0145 protein BceJ2315_57450.